The following is a 98-amino-acid chain: Co-chaperonin GroES (98 aa).

The protein belongs to the GroES chaperonin family. Heptamer of 7 subunits arranged in a ring. Interacts with the chaperonin GroEL.

Its subcellular location is the cytoplasm. Its function is as follows. Together with the chaperonin GroEL, plays an essential role in assisting protein folding. The GroEL-GroES system forms a nano-cage that allows encapsulation of the non-native substrate proteins and provides a physical environment optimized to promote and accelerate protein folding. GroES binds to the apical surface of the GroEL ring, thereby capping the opening of the GroEL channel. The polypeptide is Co-chaperonin GroES (Coprothermobacter proteolyticus (strain ATCC 35245 / DSM 5265 / OCM 4 / BT)).